The sequence spans 280 residues: Bifunctional protein FolD (280 aa).

NADP(+) is bound by residues 161 to 163 (GRS), serine 186, and isoleucine 227.

Belongs to the tetrahydrofolate dehydrogenase/cyclohydrolase family. In terms of assembly, homodimer.

The enzyme catalyses (6R)-5,10-methylene-5,6,7,8-tetrahydrofolate + NADP(+) = (6R)-5,10-methenyltetrahydrofolate + NADPH. The catalysed reaction is (6R)-5,10-methenyltetrahydrofolate + H2O = (6R)-10-formyltetrahydrofolate + H(+). Its pathway is one-carbon metabolism; tetrahydrofolate interconversion. Functionally, catalyzes the oxidation of 5,10-methylenetetrahydrofolate to 5,10-methenyltetrahydrofolate and then the hydrolysis of 5,10-methenyltetrahydrofolate to 10-formyltetrahydrofolate. The chain is Bifunctional protein FolD from Caldanaerobacter subterraneus subsp. tengcongensis (strain DSM 15242 / JCM 11007 / NBRC 100824 / MB4) (Thermoanaerobacter tengcongensis).